We begin with the raw amino-acid sequence, 431 residues long: Venom metalloproteinase 1 (431 aa).

Positions 1 to 22 (MDLFILTRFILFLSFFMKSIHC) are cleaved as a signal peptide. 4 N-linked (GlcNAc...) asparagine glycosylation sites follow: Asn64, Asn113, Asn148, and Asn187. One can recognise a Peptidase M12B domain in the interval 228 to 428 (DLLMKTSRRL…TSAACLKDTY (201 aa)). Intrachain disulfides connect Cys340/Cys423 and Cys379/Cys407. A Zn(2+)-binding site is contributed by His363. Glu364 is an active-site residue. Zn(2+) is bound by residues His367 and His373. Asn414 is a glycosylation site (N-linked (GlcNAc...) asparagine).

It in the C-terminal section; belongs to the venom metalloproteinase (M12B) family. As to quaternary structure, monomer. The cofactor is Zn(2+). Expressed by the venom gland.

It localises to the secreted. The gelatinase activity is inhibited by EDTA. Its function is as follows. The recombinant protein has gelatinase activity. In vivo, injection of this recombinant into fifth instar L.oleracea (host) larvae results in partial insect mortality associated with the molt to sixth instar, with surviving insects showing retarded development and growth. This is Venom metalloproteinase 1 from Eulophus pennicornis (Parasitoid wasp).